Reading from the N-terminus, the 509-residue chain is Putative thymidine phosphorylase (509 aa).

The protein belongs to the thymidine/pyrimidine-nucleoside phosphorylase family. Type 2 subfamily.

It carries out the reaction thymidine + phosphate = 2-deoxy-alpha-D-ribose 1-phosphate + thymine. The sequence is that of Putative thymidine phosphorylase from Chelativorans sp. (strain BNC1).